The chain runs to 482 residues: C3a anaphylatoxin chemotactic receptor (482 aa).

Residues Met-1–Val-23 lie on the Extracellular side of the membrane. N-linked (GlcNAc...) asparagine glycosylation is present at Asn-9. Residues Ile-24–Trp-46 traverse the membrane as a helical segment. The Cytoplasmic segment spans residues Val-47–Asn-57. The helical transmembrane segment at Thr-58–Ala-80 threads the bilayer. Residues His-81–Lys-96 lie on the Extracellular side of the membrane. Cys-95 and Cys-172 form a disulfide bridge. Residues Leu-97–Leu-118 form a helical membrane-spanning segment. Over Asp-119–Ala-139 the chain is Cytoplasmic. Residues Cys-140–Tyr-160 form a helical membrane-spanning segment. Residues Arg-161–Arg-340 lie on the Extracellular side of the membrane. Tyr-174 and Tyr-184 each carry sulfotyrosine. A glycan (N-linked (GlcNAc...) asparagine) is linked at Asn-194. Ser-266 carries O-linked (GalNAc...) serine glycosylation. Position 318 is a sulfotyrosine (Tyr-318). Residues Leu-341–Val-360 form a helical membrane-spanning segment. At Phe-361 to Arg-377 the chain is on the cytoplasmic side. Residues Val-378–Ser-400 form a helical membrane-spanning segment. Topologically, residues Leu-401–Asp-417 are extracellular. Residues His-418–Leu-438 traverse the membrane as a helical segment. Over Gly-439 to Val-482 the chain is Cytoplasmic. Ser-459 bears the Phosphoserine mark. Thr-463 is subject to Phosphothreonine.

The protein belongs to the G-protein coupled receptor 1 family. In terms of assembly, interacts with VGF-derived peptide TLQP-21. Among the sulfation sites Tyr-174 is essential for binding of C3a anaphylatoxin. In terms of processing, O-glycosylated. Widely expressed in several differentiated hematopoietic cell lines, in the lung, spleen, ovary, placenta, small intestine, throughout the brain, heart, and endothelial cells. Mostly expressed in lymphoid tissues.

It localises to the cell membrane. Receptor for the chemotactic and inflammatory peptide anaphylatoxin C3a. This receptor stimulates chemotaxis, granule enzyme release and superoxide anion production. The sequence is that of C3a anaphylatoxin chemotactic receptor (C3AR1) from Homo sapiens (Human).